A 159-amino-acid polypeptide reads, in one-letter code: Small ribosomal subunit protein uS4 (159 aa).

The region spanning 106–158 (RRLQTIVYRKGLAKSIYHARQLVVHGHVAVAGRRVTSPGFLVPRDLEDKITLI) is the S4 RNA-binding domain.

This sequence belongs to the universal ribosomal protein uS4 family. Part of the 30S ribosomal subunit. Contacts protein S5. The interaction surface between S4 and S5 is involved in control of translational fidelity.

Its function is as follows. One of the primary rRNA binding proteins, it binds directly to 16S rRNA where it nucleates assembly of the body of the 30S subunit. Functionally, with S5 and S12 plays an important role in translational accuracy. The protein is Small ribosomal subunit protein uS4 of Pyrobaculum islandicum (strain DSM 4184 / JCM 9189 / GEO3).